Reading from the N-terminus, the 370-residue chain is Pyrimidine monooxygenase RutA (370 aa).

FMN contacts are provided by residues 49-50 (IK), asparagine 115, glutamate 124, 140-141 (RY), and serine 190.

This sequence belongs to the NtaA/SnaA/DszA monooxygenase family. RutA subfamily.

The enzyme catalyses uracil + FMNH2 + NADH + O2 = (Z)-3-ureidoacrylate + FMN + NAD(+) + H2O + H(+). It carries out the reaction thymine + FMNH2 + NADH + O2 = (Z)-2-methylureidoacrylate + FMN + NAD(+) + H2O + H(+). Functionally, catalyzes the pyrimidine ring opening between N-3 and C-4 by an unusual flavin hydroperoxide-catalyzed mechanism, adding oxygen atoms in the process to yield ureidoacrylate peracid, that immediately reacts with FMN forming ureidoacrylate and FMN-N(5)-oxide. The FMN-N(5)-oxide reacts spontaneously with NADH to produce FMN. Requires the flavin reductase RutF to regenerate FMN in vivo. This is Pyrimidine monooxygenase RutA from Variovorax paradoxus (strain S110).